Consider the following 457-residue polypeptide: MAVSLWQQCIGRLQDELSAQQFSMWIRPLQAEMEGDTLVLYAPNRFVLDWVRDKYINSINQFFTEQLGDNAPKLRFDIGSRPSAKPQAPAPAAVKAAAPQPKPGNSFVSQPEPAVSNHRSNINPTYQFDNFVEGKSNQLGKAAALQVAENPGGAYNPLFLYGGTGLGKTHLLHAVGNGIIKNNPNAKVVYMHSERFVQDMVKALQNNAIEEFKRYYRSVDALFIDDIQFFANKDRSQEEFFHTFNALLEGNHQIILTSDRYPKEIDGVEDRLKSRFGWGLTVAIEPPELETRVAILMRKAQESGINLPDEVAFFIAKRLRSNVRELEGALNRVIANANFTGRPITIDFVREALRDLLALQEKLVTIDNIQKTVAEYYKIKMADMLSKRRSRSVARPRQMAMALSKELTNQSLPEIGDAFGGRDHTTVLHACRKIAQLREESHDIKEDYANLIRTLSS.

Residues 1 to 90 (MAVSLWQQCI…RPSAKPQAPA (90 aa)) are domain I, interacts with DnaA modulators. The disordered stretch occupies residues 79–120 (GSRPSAKPQAPAPAAVKAAAPQPKPGNSFVSQPEPAVSNHRS). The span at 84–99 (AKPQAPAPAAVKAAAP) shows a compositional bias: low complexity. The segment at 91–120 (PAAVKAAAPQPKPGNSFVSQPEPAVSNHRS) is domain II. The tract at residues 121–337 (NINPTYQFDN…GALNRVIANA (217 aa)) is domain III, AAA+ region. Gly165, Gly167, Lys168, and Thr169 together coordinate ATP. The tract at residues 338–457 (NFTGRPITID…YANLIRTLSS (120 aa)) is domain IV, binds dsDNA.

It belongs to the DnaA family. In terms of assembly, oligomerizes as a right-handed, spiral filament on DNA at oriC.

It is found in the cytoplasm. Plays an essential role in the initiation and regulation of chromosomal replication. ATP-DnaA binds to the origin of replication (oriC) to initiate formation of the DNA replication initiation complex once per cell cycle. Binds the DnaA box (a 9 base pair repeat at the origin) and separates the double-stranded (ds)DNA. Forms a right-handed helical filament on oriC DNA; dsDNA binds to the exterior of the filament while single-stranded (ss)DNA is stabiized in the filament's interior. The ATP-DnaA-oriC complex binds and stabilizes one strand of the AT-rich DNA unwinding element (DUE), permitting loading of DNA polymerase. After initiation quickly degrades to an ADP-DnaA complex that is not apt for DNA replication. Binds acidic phospholipids. The protein is Chromosomal replication initiator protein DnaA of Shewanella amazonensis (strain ATCC BAA-1098 / SB2B).